The following is a 248-amino-acid chain: ATP synthase subunit a, chloroplastic (248 aa).

A run of 5 helical transmembrane segments spans residues 38–58 (QVLITSWVVIAILLGSAAIAV), 96–116 (VPFIGTLFLFIFVSNWSGALL), 135–155 (INTTVALALLTSVAYFYAGLT), 200–220 (LVVVVLVSLVPLVIPIPVMFL), and 221–241 (GLFTSGIQALIFATLAAAYIG).

It belongs to the ATPase A chain family. F-type ATPases have 2 components, CF(1) - the catalytic core - and CF(0) - the membrane proton channel. CF(1) has five subunits: alpha(3), beta(3), gamma(1), delta(1), epsilon(1). CF(0) has four main subunits: a, b, b' and c.

The protein localises to the plastid. Its subcellular location is the chloroplast thylakoid membrane. In terms of biological role, key component of the proton channel; it plays a direct role in the translocation of protons across the membrane. The chain is ATP synthase subunit a, chloroplastic from Nuphar advena (Common spatterdock).